Reading from the N-terminus, the 500-residue chain is Apolipoprotein N-acyltransferase (500 aa).

The next 6 membrane-spanning stretches (helical) occupy residues 5 to 25 (VAPFAAWFLAWIALAPLWIFV), 38 to 58 (LLLLGLTWGIGYHGVALFWIT), 74 to 94 (LAITIFCWSFISFYGGLFGAI), 111 to 131 (ILIGTAMWCVLESLWSAGPLW), 145 to 165 (AILHLGQISGPNLVTAAIVSV), and 185 to 205 (LAIATGLLITLHLIGFGLYTA). Positions 215–462 (LKVGIVQGNI…ETIYRRQTQN (248 aa)) constitute a CN hydrolase domain. The Proton acceptor role is filled by Glu261. Lys318 is a catalytic residue. Residue Cys369 is the Nucleophile of the active site. The chain crosses the membrane as a helical span at residues 469-489 (DWFTPLLVGLSFLGWSLNIFW).

Belongs to the CN hydrolase family. Apolipoprotein N-acyltransferase subfamily.

It localises to the cell inner membrane. It carries out the reaction N-terminal S-1,2-diacyl-sn-glyceryl-L-cysteinyl-[lipoprotein] + a glycerophospholipid = N-acyl-S-1,2-diacyl-sn-glyceryl-L-cysteinyl-[lipoprotein] + a 2-acyl-sn-glycero-3-phospholipid + H(+). Its pathway is protein modification; lipoprotein biosynthesis (N-acyl transfer). Its function is as follows. Catalyzes the phospholipid dependent N-acylation of the N-terminal cysteine of apolipoprotein, the last step in lipoprotein maturation. In Nostoc sp. (strain PCC 7120 / SAG 25.82 / UTEX 2576), this protein is Apolipoprotein N-acyltransferase.